A 394-amino-acid chain; its full sequence is Elongation factor Tu (394 aa).

A tr-type G domain is found at Lys10–Arg205. The tract at residues Gly19–Thr26 is G1. Gly19 to Thr26 lines the GTP pocket. Thr26 provides a ligand contact to Mg(2+). The tract at residues Gly60 to Asn64 is G2. A G3 region spans residues Asp81 to Gly84. Residues Asp81–His85 and Asn136–Asp139 each bind GTP. The G4 stretch occupies residues Asn136–Asp139. Residues Ser174–Leu176 are G5.

The protein belongs to the TRAFAC class translation factor GTPase superfamily. Classic translation factor GTPase family. EF-Tu/EF-1A subfamily. In terms of assembly, monomer.

Its subcellular location is the cytoplasm. It carries out the reaction GTP + H2O = GDP + phosphate + H(+). In terms of biological role, GTP hydrolase that promotes the GTP-dependent binding of aminoacyl-tRNA to the A-site of ribosomes during protein biosynthesis. The polypeptide is Elongation factor Tu (Bacteroides fragilis (strain ATCC 25285 / DSM 2151 / CCUG 4856 / JCM 11019 / LMG 10263 / NCTC 9343 / Onslow / VPI 2553 / EN-2)).